The sequence spans 273 residues: Glucosamine-6-phosphate deaminase (273 aa).

D72 functions as the Proton acceptor; for enolization step in the catalytic mechanism. D141 functions as the For ring-opening step in the catalytic mechanism. The active-site Proton acceptor; for ring-opening step is the H143. The active-site For ring-opening step is the E148.

This sequence belongs to the glucosamine/galactosamine-6-phosphate isomerase family. As to quaternary structure, homohexamer.

The protein localises to the cytoplasm. The catalysed reaction is alpha-D-glucosamine 6-phosphate + H2O = beta-D-fructose 6-phosphate + NH4(+). It functions in the pathway nucleotide-sugar biosynthesis; UDP-N-acetyl-alpha-D-glucosamine biosynthesis; alpha-D-glucosamine 6-phosphate from D-fructose 6-phosphate: step 1/1. Its function is as follows. Catalyzes the reversible conversion of alpha-D-glucosamine 6-phosphate (GlcN-6P) into beta-D-fructose 6-phosphate (Fru-6P) and ammonium ion, a regulatory reaction step in de novo uridine diphosphate-N-acetyl-alpha-D-glucosamine (UDP-GlcNAc) biosynthesis via hexosamine pathway. This Drosophila melanogaster (Fruit fly) protein is Glucosamine-6-phosphate deaminase.